A 1161-amino-acid polypeptide reads, in one-letter code: Cell wall protein DAN4 (1161 aa).

Residues 1-19 (MVNISIVAGIVALATSAAA) form the signal peptide. Disordered regions lie at residues 123-309 (TSTS…SASS), 326-345 (TPAT…STTN), 354-547 (TTTS…SSFG), and 691-713 (STDS…SSTA). Residues 134 to 286 (TSTTPTTTIT…TTSTTSTTST (153 aa)) are 46 X 3 AA tandem repeats of T-[SP]-T. Residues 354–372 (TTTSDTYISSSSPSQVTSS) are compositionally biased toward low complexity. Repeat copies occupy residues 373-384 (AEPTTVSEVTSS), 385-396 (VEPTRSSQVTSS), 397-408 (AEPTTVSEFTSS), 409-420 (VEPTRSSQVTSS), 421-432 (AEPTTVSEFTSS), 433-444 (VEPTRSSQVTSS), 445-456 (AEPTTVSEFTSS), 457-468 (VEPTRSSQVTSS), 469-480 (AEPTTVSEFTSS), 481-492 (VEPTRSSQVTSS), 493-504 (AEPTTVSEFTSS), 505-516 (VEPIRSSQVTSS), 517-528 (AEPTTVSEVTSS), and 529-540 (VEPIRSSQVTTT). Positions 373–540 (AEPTTVSEVT…PIRSSQVTTT (168 aa)) are 14 X 12 AA approximate tandem repeats. Polar residues predominate over residues 373-547 (AEPTTVSEVT…TTTEPVSSFG (175 aa)). Repeat copies occupy residues 826 to 913 (EDSV…EDNE) and 914 to 1001 (EDIT…EDNE). Residues 826–1040 (EDSVLTKTQV…SPVSSFNSKA (215 aa)) are 2.5 X 88 AA approximate tandem repeats. A 2-3; truncated repeat occupies 1002 to 1040 (EDVASTKTELLTMETTITSCSGGICTTLMSPVSSFNSKA). A lipid anchor (GPI-anchor amidated asparagine) is attached at Asn1137. The propeptide at 1138 to 1161 (GAYNFDKDNIFGTAIVAVVALLLL) is removed in mature form.

It belongs to the SRP1/TIP1 family. In terms of processing, extensively O-glycosylated. The GPI-anchor is attached to the protein in the endoplasmic reticulum and serves to target the protein to the cell surface. There, the glucosamine-inositol phospholipid moiety is cleaved off and the GPI-modified mannoprotein is covalently attached via its lipidless GPI glycan remnant to the 1,6-beta-glucan of the outer cell wall layer.

The protein localises to the secreted. It localises to the cell wall. It is found in the cell membrane. In terms of biological role, component of the cell wall. The protein is Cell wall protein DAN4 of Saccharomyces cerevisiae (strain ATCC 204508 / S288c) (Baker's yeast).